The primary structure comprises 152 residues: MTLTDGVLVIFIIALLGWAIYDQWGTERRHGKTLLRVPLLKRGRADSLIFTGLVAILIWQNVASHGALLTTWLLGALGLLAIYLFWIREPQIRFKREGFFFAGGWVKYNHIKAMNLSEDGVLVMQLDKRRLLIRVKNIDDLERIYHFIVNNQ.

Transmembrane regions (helical) follow at residues 1–21 (MTLT…WAIY), 45–65 (ADSL…VASH), and 67–87 (ALLT…LFWI).

Belongs to the UPF0266 family.

The protein localises to the cell inner membrane. This is UPF0266 membrane protein ESA_01432 from Cronobacter sakazakii (strain ATCC BAA-894) (Enterobacter sakazakii).